Here is a 196-residue protein sequence, read N- to C-terminus: Probable malonic semialdehyde reductase RutE (196 aa).

This sequence belongs to the nitroreductase family. HadB/RutE subfamily. It depends on FMN as a cofactor.

It carries out the reaction 3-hydroxypropanoate + NADP(+) = 3-oxopropanoate + NADPH + H(+). Functionally, may reduce toxic product malonic semialdehyde to 3-hydroxypropionic acid, which is excreted. This Escherichia coli (strain SMS-3-5 / SECEC) protein is Probable malonic semialdehyde reductase RutE.